A 391-amino-acid chain; its full sequence is Phosphoglycerate kinase (391 aa).

Substrate contacts are provided by residues 21–23 (DLN), R36, 59–62 (HLGR), R113, and R146. ATP-binding positions include K197, E319, and 345-348 (GGDT).

This sequence belongs to the phosphoglycerate kinase family. In terms of assembly, monomer.

Its subcellular location is the cytoplasm. The enzyme catalyses (2R)-3-phosphoglycerate + ATP = (2R)-3-phospho-glyceroyl phosphate + ADP. Its pathway is carbohydrate degradation; glycolysis; pyruvate from D-glyceraldehyde 3-phosphate: step 2/5. The sequence is that of Phosphoglycerate kinase from Pseudoalteromonas atlantica (strain T6c / ATCC BAA-1087).